The primary structure comprises 1312 residues: DNA repair protein RAD50 (1312 aa).

The ATP site is built by R13, N36, G37, G39, K40, T41, T42, I65, D67, and Q158. T41 is a Mg(2+) binding site. Q158 serves as a coordination point for Mg(2+). Coiled coils occupy residues 185–347 (TKAL…LIRR) and 403–558 (QDLT…LQND). S469 bears the Phosphoserine mark. Position 568 is a phosphothreonine (T568). The stretch at 640–678 (DCTIDEYNDVLEETELSYKTALENLKMHQTTLEFNRKAL) forms a coiled coil. Residues 640–741 (DCTIDEYNDV…SLRLLEKHII (102 aa)) enclose the Zinc-hook domain. Zn(2+)-binding residues include C687 and C690. Coiled-coil stretches lie at residues 712–741 (DANF…KHII) and 787–1108 (LAES…DIEK).

Belongs to the SMC family. RAD50 subfamily. Component of the MRN complex composed of two heterodimers RAD50 and MRE11 associated with a single XRS2. The MRN complexes dimerize on DNA to form joined MRN-MRN oligomers required for DNA double-strand break repair. It depends on Zn(2+) as a cofactor.

Its subcellular location is the nucleus. The protein localises to the chromosome. The catalysed reaction is ATP + H2O = ADP + phosphate + H(+). Component of the MRN complex, which plays a central role in double-strand break (DSB) repair, DNA recombination, maintenance of telomere integrity and meiosis. The MRN complex is involved in the repair of DNA double-strand breaks (DSBs) via homologous recombination (HR), an error-free mechanism which primarily occurs during S and G2 phases. The complex (1) mediates the end resection of damaged DNA, which generates proper single-stranded DNA, a key initial steps in HR, and is (2) required for the recruitment of other repair factors and efficient activation of TEL1/ATM and ATR upon DNA damage. The MRN complex possesses single-strand endonuclease activity and double-strand-specific 3'-5' exonuclease activity, which are provided by MRE11, to initiate end resection, which is required for single-strand invasion and recombination. Within the complex, RAD50 is both required to bind DNA ends and hold them in close proximity and regulate the activity of MRE11. RAD50 provides an ATP-dependent control of MRE11 by positioning DNA ends into the MRE11 active site: ATP-binding induces a large structural change from an open form with accessible MRE11 nuclease sites into a closed form. The MRN complex is also required for the processing of R-loops. The polypeptide is DNA repair protein RAD50 (Saccharomyces cerevisiae (strain ATCC 204508 / S288c) (Baker's yeast)).